Reading from the N-terminus, the 171-residue chain is Endoribonuclease YbeY (171 aa).

Positions 126, 130, and 136 each coordinate Zn(2+).

Belongs to the endoribonuclease YbeY family. Zn(2+) is required as a cofactor.

It is found in the cytoplasm. Single strand-specific metallo-endoribonuclease involved in late-stage 70S ribosome quality control and in maturation of the 3' terminus of the 16S rRNA. The protein is Endoribonuclease YbeY of Rhizobium etli (strain CIAT 652).